The chain runs to 196 residues: Zinc metalloproteinase-disintegrin-like bothrojarin-3 (196 aa).

Residues 2–88 (PPVCGTELLE…DCPTDDIQRN (87 aa)) form the Disintegrin domain. Val4, Leu9, Glu11, Glu14, and Asp17 together coordinate Ca(2+). 13 cysteine pairs are disulfide-bonded: Cys5–Cys34, Cys16–Cys29, Cys18–Cys24, Cys28–Cys51, Cys42–Cys48, Cys47–Cys73, Cys60–Cys80, Cys67–Cys99, Cys92–Cys104, Cys111–Cys161, Cys126–Cys168, Cys139–Cys149, and Cys156–Cys193. A D/ECD-tripeptide motif is present at residues 66–68 (ECD).

The protein belongs to the venom metalloproteinase (M12B) family. P-III subfamily. P-IIIa sub-subfamily. As to quaternary structure, monomer. It depends on Zn(2+) as a cofactor. Glycosylated. As to expression, expressed by the venom gland.

Its subcellular location is the secreted. Functionally, the hemorrhagic metalloproteinase-disintegrin-like bothrojarin-1 is a potent inhibitor of collagen-induced platelet aggregation by blockage of alpha-2/beta-1 (ITGA2/ITGB1) integrin. It does not present any fibrinogen-clotting activity. The polypeptide is Zinc metalloproteinase-disintegrin-like bothrojarin-3 (Bothrops jararaca (Jararaca)).